Here is a 728-residue protein sequence, read N- to C-terminus: Protein Hook homolog 1 (728 aa).

Methionine 1 bears the N-acetylmethionine mark. A sufficient for interaction with microtubules region spans residues 1–555; that stretch reads MEDPQPLPQS…LKQKLEAHME (555 aa). One can recognise a Calponin-homology (CH) domain in the interval 12 to 128; sequence LPLCDSLIIW…RLLQLILGCA (117 aa). 2 coiled-coil regions span residues 168–443 and 477–658; these read PASD…LNQA and LRLQ…AKLR. Serine 235 is modified (phosphoserine). Positions 481–510 are disordered; that stretch reads QEGTENERIEQLQEQLEQKHRKMNELETEQ. Positions 657-728 are sufficient for interaction with AKTIP and VPS18; sequence LRDYEEKLIV…SVKVPAAASD (72 aa). Residues serine 719 and serine 727 each carry the phosphoserine modification.

It belongs to the hook family. In terms of assembly, self-associates. Component of the FTS/Hook/FHIP complex (FHF complex), composed of AKTIP/FTS, FHIP1B, and one or more members of the Hook family of proteins HOOK1, HOOK2, and HOOK3. Interacts directly with AKTIP/FTS, HOOK2 and HOOK3. Associates with several subunits of the homotypic vesicular sorting complex (the HOPS complex) including VPS16, VPS18, VPS39 and VPS41; these interactions may be indirect. Interacts with CCDC181. Interacts (via coiled-coil region) with RIMBP3 (via C-terminus). Interacts with LRGUK (via guanylate kinase-like domain). Interacts with microtubules. May interacts with CLN3. Interacts with AP4M1; the interaction is direct, mediates the interaction between FTS-Hook-FHIP (FHF) complex and AP-4 and the perinuclear distribution of AP-4. As to expression, mainly expressed in testis.

It is found in the cytoplasm. Its subcellular location is the cytoskeleton. In terms of biological role, component of the FTS/Hook/FHIP complex (FHF complex). The FHF complex may function to promote vesicle trafficking and/or fusion via the homotypic vesicular protein sorting complex (the HOPS complex). FHF complex promotes the distribution of AP-4 complex to the perinuclear area of the cell. Required for spermatid differentiation. Probably involved in the positioning of the microtubules of the manchette and the flagellum in relation to the membrane skeleton. The polypeptide is Protein Hook homolog 1 (Hook1) (Mus musculus (Mouse)).